Here is a 277-residue protein sequence, read N- to C-terminus: 2,3,4,5-tetrahydropyridine-2,6-dicarboxylate N-succinyltransferase (277 aa).

Substrate is bound by residues arginine 106 and aspartate 143.

It belongs to the transferase hexapeptide repeat family. As to quaternary structure, homotrimer.

The protein resides in the cytoplasm. The enzyme catalyses (S)-2,3,4,5-tetrahydrodipicolinate + succinyl-CoA + H2O = (S)-2-succinylamino-6-oxoheptanedioate + CoA. It functions in the pathway amino-acid biosynthesis; L-lysine biosynthesis via DAP pathway; LL-2,6-diaminopimelate from (S)-tetrahydrodipicolinate (succinylase route): step 1/3. The polypeptide is 2,3,4,5-tetrahydropyridine-2,6-dicarboxylate N-succinyltransferase (Variovorax paradoxus (strain S110)).